Here is a 203-residue protein sequence, read N- to C-terminus: Probable flagellin 1 (203 aa).

Residues 1 to 6 constitute a propeptide that is removed on maturation; it reads MRRRRG.

It belongs to the archaeal flagellin family.

It is found in the archaeal flagellum. Flagellin is the subunit protein which polymerizes to form the filaments of archaeal flagella. The sequence is that of Probable flagellin 1 (flaB1) from Aeropyrum pernix (strain ATCC 700893 / DSM 11879 / JCM 9820 / NBRC 100138 / K1).